We begin with the raw amino-acid sequence, 443 residues long: UDP-N-acetylmuramate--L-alanine ligase (443 aa).

Residue 110 to 116 (GAHGKTS) coordinates ATP.

Belongs to the MurCDEF family.

It is found in the cytoplasm. The enzyme catalyses UDP-N-acetyl-alpha-D-muramate + L-alanine + ATP = UDP-N-acetyl-alpha-D-muramoyl-L-alanine + ADP + phosphate + H(+). It functions in the pathway cell wall biogenesis; peptidoglycan biosynthesis. In terms of biological role, cell wall formation. The polypeptide is UDP-N-acetylmuramate--L-alanine ligase (Lactococcus lactis subsp. cremoris (strain SK11)).